A 161-amino-acid chain; its full sequence is Protein YzcX (161 aa).

In Escherichia coli (strain K12), this protein is Protein YzcX (yzcX).